Here is an 80-residue protein sequence, read N- to C-terminus: Ubiquinol-cytochrome c reductase complex assembly factor 5 (80 aa).

Over 1–19 (MFSRAQVRRALQRVPGKQR) the chain is Mitochondrial matrix. Residues 20–41 (FGIYRFLPFFFVLGGAMEWIMI) form a helical membrane-spanning segment. The Mitochondrial intermembrane portion of the chain corresponds to 42–80 (KVRVGQETFYDVYRRKASERQYQRRLEDTSETNLHKLIK).

The protein belongs to the UQCC5 family. Associates with the mitochondrial ribosome. Interacts with UQCC6. Interacts with MT-CYB; interacts with newly synthesizes MT-CYB. Forms a complex, named COMB/coordinator of mitochondrial CYTB biogenesis, composed of UQCC1, UQCC2, UQCC4, UQCC5 and UQCC6; stabilizes nascent cytochrome b/MT-CYB and promotes its membrane insertion.

It localises to the mitochondrion inner membrane. In terms of biological role, required for the assembly and stability of the mitochondrial ubiquinol-cytochrome c reductase complex (complex III (CIII) or cytochrome b-c1 complex), a multisubunit transmembrane complex that is part of the mitochondrial electron transport chain (ETC) which drives oxidative phosphorylation. Mediates early complex III biogenesis. Participates in regulating the levels of electron transport chain proteins, and therefore energy supply, in response to changes in energy demand. Also required for cytochrome c oxidase complex (complex IV) assembly. This Mus musculus (Mouse) protein is Ubiquinol-cytochrome c reductase complex assembly factor 5.